A 357-amino-acid chain; its full sequence is Protein RecA (357 aa).

Residue 67–74 (GPESSGKT) coordinates ATP. Residues 335–357 (LSSSASDDENSEGNVDFETGEVF) form a disordered region.

This sequence belongs to the RecA family.

The protein resides in the cytoplasm. Functionally, can catalyze the hydrolysis of ATP in the presence of single-stranded DNA, the ATP-dependent uptake of single-stranded DNA by duplex DNA, and the ATP-dependent hybridization of homologous single-stranded DNAs. It interacts with LexA causing its activation and leading to its autocatalytic cleavage. This is Protein RecA from Shewanella sp. (strain MR-4).